The following is a 333-amino-acid chain: Glyoxylate reductase (333 aa).

NADP(+)-binding positions include 158–161, 180–182, and 239–241; these read FGRI, SRS, and IAR. Residues arginine 241 and glutamate 270 contribute to the active site. The active-site Proton donor is histidine 288. An NADP(+)-binding site is contributed by 288–290; sequence HIG.

This sequence belongs to the D-isomer specific 2-hydroxyacid dehydrogenase family. GyaR subfamily. Homodimer.

The protein localises to the cytoplasm. The catalysed reaction is glycolate + NAD(+) = glyoxylate + NADH + H(+). The sequence is that of Glyoxylate reductase from Thermococcus kodakarensis (strain ATCC BAA-918 / JCM 12380 / KOD1) (Pyrococcus kodakaraensis (strain KOD1)).